Reading from the N-terminus, the 100-residue chain is UPF0213 protein YhbQ (100 aa).

Residues 2 to 77 (TPWYLYLIRT…KQLTKRQKER (76 aa)) form the GIY-YIG domain.

Belongs to the UPF0213 family.

The polypeptide is UPF0213 protein YhbQ (Salmonella choleraesuis (strain SC-B67)).